We begin with the raw amino-acid sequence, 264 residues long: 2-C-methyl-D-erythritol 4-phosphate cytidylyltransferase (264 aa).

Positions 234 to 264 (ARDPESAHPQSSVLASAFSGPGSRVSGPEEI) are disordered.

It belongs to the IspD/TarI cytidylyltransferase family. IspD subfamily.

It catalyses the reaction 2-C-methyl-D-erythritol 4-phosphate + CTP + H(+) = 4-CDP-2-C-methyl-D-erythritol + diphosphate. Its pathway is isoprenoid biosynthesis; isopentenyl diphosphate biosynthesis via DXP pathway; isopentenyl diphosphate from 1-deoxy-D-xylulose 5-phosphate: step 2/6. Catalyzes the formation of 4-diphosphocytidyl-2-C-methyl-D-erythritol from CTP and 2-C-methyl-D-erythritol 4-phosphate (MEP). The sequence is that of 2-C-methyl-D-erythritol 4-phosphate cytidylyltransferase from Xanthomonas euvesicatoria pv. vesicatoria (strain 85-10) (Xanthomonas campestris pv. vesicatoria).